The following is a 78-amino-acid chain: Translation initiation factor IF-1, chloroplastic (78 aa).

The S1-like domain maps to 1-72 (MEKQKLIDME…TKGRITYRLR (72 aa)).

The protein belongs to the IF-1 family. Component of the 30S ribosomal translation pre-initiation complex which assembles on the 30S ribosome in the order IF-2 and IF-3, IF-1 and N-formylmethionyl-tRNA(fMet); mRNA recruitment can occur at any time during PIC assembly.

It is found in the plastid. The protein localises to the chloroplast. Its function is as follows. One of the essential components for the initiation of protein synthesis. Stabilizes the binding of IF-2 and IF-3 on the 30S subunit to which N-formylmethionyl-tRNA(fMet) subsequently binds. Helps modulate mRNA selection, yielding the 30S pre-initiation complex (PIC). Upon addition of the 50S ribosomal subunit IF-1, IF-2 and IF-3 are released leaving the mature 70S translation initiation complex. This is Translation initiation factor IF-1, chloroplastic from Marchantia polymorpha (Common liverwort).